The sequence spans 181 residues: Malignant T-cell-amplified sequence 2 (181 aa).

The 80-residue stretch at 92–171 (LPHQQVDKGA…IGIENIHYLN (80 aa)) folds into the PUA domain.

It belongs to the MCTS1 family.

It localises to the cytoplasm. The sequence is that of Malignant T-cell-amplified sequence 2 from Homo sapiens (Human).